The primary structure comprises 183 residues: Bifunctional protein PyrR (183 aa).

The PRPP-binding signature appears at 102 to 114 (VVLVDDVLFSGRT).

The protein belongs to the purine/pyrimidine phosphoribosyltransferase family. PyrR subfamily.

The enzyme catalyses UMP + diphosphate = 5-phospho-alpha-D-ribose 1-diphosphate + uracil. Functionally, regulates the transcription of the pyrimidine nucleotide (pyr) operon in response to exogenous pyrimidines. Also displays a weak uracil phosphoribosyltransferase activity which is not physiologically significant. This is Bifunctional protein PyrR from Leifsonia xyli subsp. xyli (strain CTCB07).